A 775-amino-acid chain; its full sequence is Serine/threonine-protein kinase-like protein CCR1 (775 aa).

An N-terminal signal peptide occupies residues 1–23; it reads METRCSLLFLSLILLYLPKPGSG. The Extracellular portion of the chain corresponds to 24–439; the sequence is FGSSGPIAAS…DKHWHQLQRL (416 aa). Asn-57, Asn-102, Asn-167, Asn-213, Asn-220, Asn-241, Asn-261, Asn-292, Asn-328, and Asn-360 each carry an N-linked (GlcNAc...) asparagine glycan. The stretch at 351-406 is one TNFR-Cys repeat; sequence PCNEKEFAFNASILNEPDLTSLCVRKELMVCSPCGSDCSHGFFLSSSCTANSDRIC. Intrachain disulfides connect Cys-352–Cys-381, Cys-384–Cys-398, and Cys-388–Cys-406. A glycan (N-linked (GlcNAc...) asparagine) is linked at Asn-414. Residues 440-460 traverse the membrane as a helical segment; it reads VLIIGSCASALLIIIIGCCVV. At 461-775 the chain is on the cytoplasmic side; it reads PRIVTSPNKE…EHVARDALIF (315 aa). The 251-residue stretch at 520–770 folds into the Protein kinase domain; that stretch reads FKEFNELGRG…LANWLEHVAR (251 aa). ATP contacts are provided by residues 526 to 534 and Lys-548; that span reads LGRGSYGFV. Residue Asp-645 is the Proton acceptor of the active site.

It belongs to the protein kinase superfamily. Ser/Thr protein kinase family. In terms of assembly, homodimer. Expressed in roots, leaves, shoot apical meristems (SAM), and floral buds.

Its subcellular location is the membrane. The enzyme catalyses L-seryl-[protein] + ATP = O-phospho-L-seryl-[protein] + ADP + H(+). It catalyses the reaction L-threonyl-[protein] + ATP = O-phospho-L-threonyl-[protein] + ADP + H(+). Functionally, serine/threonine-protein kinase with low activity. The sequence is that of Serine/threonine-protein kinase-like protein CCR1 (CCR1) from Arabidopsis thaliana (Mouse-ear cress).